The chain runs to 248 residues: Conoporin-Cn1 (248 aa).

The signal sequence occupies residues Met1–Ser23. Residues Thr45–Asn64 form an N-terminal region region. The phosphocholine site is built by Gly120, Ser138, Pro140, Tyr167, and Tyr171.

The protein belongs to the actinoporin family. Conoidea subfamily. As to quaternary structure, octamer or nonamer in membranes. Monomer in the soluble state. 9 isoforms are detected in the injectable venom, mainly corresponding to different oxidative states. As to expression, expressed by the venom duct.

The protein localises to the secreted. It is found in the nematocyst. Its subcellular location is the target cell membrane. Its function is as follows. Pore-forming protein that forms pores of around 1 nm and causes cardiac stimulation and cytolysis. The protein is Conoporin-Cn1 of Conus consors (Singed cone).